The primary structure comprises 379 residues: uncharacterized protein (379 aa).

The helical transmembrane segment at 9–26 threads the bilayer; the sequence is YFQLITTIFLISSITIAA.

It to A.liquefaciens L-sorbosone dehydrogenase.

The protein localises to the membrane. This is an uncharacterized protein from Borreliella burgdorferi (strain ATCC 35210 / DSM 4680 / CIP 102532 / B31) (Borrelia burgdorferi).